The chain runs to 60 residues: UPF0434 protein YcaR (60 aa).

This sequence belongs to the UPF0434 family.

The sequence is that of UPF0434 protein YcaR from Escherichia coli O139:H28 (strain E24377A / ETEC).